Reading from the N-terminus, the 315-residue chain is MDALLKEIEKLSQPSLQKENNDVCDLCFMQMKKISNYQLLCEECGQLKDWFEPEYNEKFTVYSRLKIVGANSSYHQRDLDKANSSDYSSLQFHHILEELKSLNVKYMDAGQKPFPIQVLKETAHSYNQVQQHRVIRSITKLQILASILRSICLKLNIACTVADAARFTQLNTKGISRGMDLLRSLFVDNKITLNVDLNPIDSFINSTYSALQIKQIHQELQEENVYNLKEIVKSFILYADEKNIGVDLNRRTVVIATMYNVLRRAYYPIEIDTVVYQCKIRKNTITRALKMYEDYYSHFKSLYEQYHLNAAKKLI.

It belongs to the asfivirus C315R family.

In terms of biological role, putative initation factor. In African swine fever virus (strain Badajoz 1971 Vero-adapted) (Ba71V), this protein is Initiation factor TFIIB homolog.